Reading from the N-terminus, the 1820-residue chain is Sodium channel protein (1820 aa).

Topologically, residues 1 to 117 (MARKFSSARP…FNPIRRGAIR (117 aa)) are cytoplasmic. One copy of the I repeat lies at 108–410 (FNPIRRGAIR…VAMAYEEQNQ (303 aa)). The helical transmembrane segment at 118 to 138 (VFVNSAFNFFIMFTIFSNCIF) threads the bilayer. Residues 139–149 (MTISNPPAWSK) lie on the Extracellular side of the membrane. The chain crosses the membrane as a helical span at residues 150 to 171 (IVEYTFTGIYTFEVIVKVLSRG). Residues 172–176 (FCIGH) are Cytoplasmic-facing. Residues 177–197 (FTFLRDPWNWLDFSVVTMTYI) traverse the membrane as a helical segment. The Extracellular portion of the chain corresponds to 198–203 (TEFIDL). The chain crosses the membrane as a helical; Voltage-sensor span at residues 204 to 224 (RNVSALRTFRVLRALKTITIF). Over 225–243 (PGLKTIVRALIESMKQMGD) the chain is Cytoplasmic. The helical transmembrane segment at 244–264 (VVILTVFSLAVFTLAGMQLFM) threads the bilayer. Over 265-346 (GNLRHKCIRW…PNYGYTNYDN (82 aa)) the chain is Extracellular. Cysteines 271 and 324 form a disulfide. Asn278, Asn288, and Asn317 each carry an N-linked (GlcNAc...) asparagine glycan. The interval 285–342 (SAYNTTFDFTAYIENEENQYFLDGALDALLCGNNSDAGKCPEGYTCMKAGRNPNYGYT) is non-homologous region of repeat I. Positions 347-371 (FAWTFLCLFRLMLQDYWENLYQMTL) form an intramembrane region, pore-forming. At 372-378 (RAAGKSY) the chain is on the extracellular side. Residues 379-402 (MVFFIMVIFLGSFYLINLILAVVA) form a helical membrane-spanning segment. The Cytoplasmic portion of the chain corresponds to 403-557 (MAYEEQNQAT…CCGPWVFLKK (155 aa)). The segment at 483–507 (SVKLSTEEQRSDSKSMDSKHSVDKP) is disordered. The segment covering 487 to 507 (STEEQRSDSKSMDSKHSVDKP) has biased composition (basic and acidic residues). An II repeat occupies 548 to 811 (CCGPWVFLKK…EEDDEVNSLQ (264 aa)). The helical transmembrane segment at 558–578 (WVHFVMMDPFTDLFITLCIIL) threads the bilayer. The Extracellular portion of the chain corresponds to 579 to 599 (NTLFMSIEHHPMNESFQSLLS). The N-linked (GlcNAc...) asparagine glycan is linked to Asn591. Residues 600–620 (AGNLVFTTIFAAEMVLKIIAL) form a helical membrane-spanning segment. Residues 621–625 (DPYYY) are Cytoplasmic-facing. The helical transmembrane segment at 626 to 643 (FQQTWNIFDSIIVSLSLL) threads the bilayer. The Extracellular portion of the chain corresponds to 644 to 650 (ELGLSNM). A helical; Voltage-sensor transmembrane segment spans residues 651 to 671 (QGMSVLRSLRLLRIFKLAKSW). Topologically, residues 672–690 (PTLNILIKIICNSVGALGN) are cytoplasmic. A helical transmembrane segment spans residues 691–711 (LTIVLAIIVFIFALVGFQLFG). The Extracellular portion of the chain corresponds to 712–734 (KNYKEYVCKISDDCELPRWHMND). The segment at residues 735–755 (FFHSFLIVFRALCGEWIETMW) is an intramembrane region (pore-forming). The Extracellular portion of the chain corresponds to 756–766 (DCMEVGGVPMC). An intrachain disulfide couples Cys757 to Cys766. Residues 767–790 (LAVYMMVIIIGNLVMLNLFLALLL) traverse the membrane as a helical segment. The Cytoplasmic segment spans residues 791–1004 (SSFSSDNLSS…TIVEHDYFET (214 aa)). Disordered regions lie at residues 844-864 (PPSDDVVGEEGDNEGKKDTLP) and 891-959 (VKGE…SKDP). The segment covering 896–910 (EIEEEGLVDSSDEED) has biased composition (acidic residues). Over residues 924 to 935 (SVCSTVDYSPSE) the composition is skewed to polar residues. Residues 942–953 (EEEEEEEEEPEE) are compositionally biased toward acidic residues. An III repeat occupies 988-1295 (NLRRTCYTIV…KKYYNAMKKL (308 aa)). A helical membrane pass occupies residues 1005–1025 (FIIFMILLSSGVLAFEDIYIW). At 1026–1037 (RRRVIKVILEYA) the chain is on the extracellular side. A helical transmembrane segment spans residues 1038–1058 (DKVFTYVFIVEMLLKWVAYGF). The Cytoplasmic portion of the chain corresponds to 1059–1065 (KRYFTDA). The helical transmembrane segment at 1066 to 1086 (WCWLDFVIVGASIMGITSSLL) threads the bilayer. Over 1087 to 1091 (GYEEL) the chain is Extracellular. A helical; Voltage-sensor transmembrane segment spans residues 1092 to 1112 (GAIKNLRTIRALRPLRALSRF). Topologically, residues 1113–1131 (EGMKVVVRALLGAIPSIMN) are cytoplasmic. The chain crosses the membrane as a helical span at residues 1132–1152 (VLLVCLMFWLIFSIMGVNLFA). Topologically, residues 1153–1199 (GKFYRCINTTTDEILPVEEVNNRSDCMALMYTNEVRWVNLKVNYDNA) are extracellular. Residues Asn1160 and Asn1174 are each glycosylated (N-linked (GlcNAc...) asparagine). A non-homologous region of repeat III region spans residues 1172–1194 (VNNRSDCMALMYTNEVRWVNLKV). Positions 1200-1221 (GMGYLSLLQVSTFKGWMDIMYA) form an intramembrane region, pore-forming. At 1222 to 1243 (AVDSREVEDQPIYEINVYMYLY) the chain is on the extracellular side. The helical transmembrane segment at 1244 to 1264 (FVIFIVFGAFFTLNLFIGVII) threads the bilayer. Residues 1265–1320 (DNFNRQKQKLGGEDLFMTEEQKKYYNAMKKLGSKKAAKCIPRPSNVVQGVVYDIVT) lie on the Cytoplasmic side of the membrane. The IV repeat unit spans residues 1304 to 1602 (IPRPSNVVQG…WHKFDVHGTQ (299 aa)). Residues 1321-1341 (QPFTDIFIMALICINMVAMMV) traverse the membrane as a helical segment. At 1342 to 1352 (ESEDQSQVKKD) the chain is on the extracellular side. The chain crosses the membrane as a helical span at residues 1353–1376 (ILSQINVIFVIIFTVECLLKLLAL). The Cytoplasmic portion of the chain corresponds to 1377 to 1380 (RQYF). Residues 1381-1398 (FTVGWNVFDFAVVVISII) traverse the membrane as a helical segment. Topologically, residues 1399 to 1416 (GLLLSDIIEKYFVSPTLF) are extracellular. The helical; Voltage-sensor transmembrane segment at 1417 to 1437 (RVIRLARIARVLRLIRAAKGI) threads the bilayer. At 1438-1453 (RTLLFALMMSLPALFN) the chain is on the cytoplasmic side. Residues 1454–1474 (IGLLLFLIMFIFSIFGMSNFA) traverse the membrane as a helical segment. Residues 1475-1490 (YVKKQGGVDDIFNFET) are Extracellular-facing. A non-homologous region of repeat IV region spans residues 1490–1505 (TFGNSMICLFEITTSA). An intramembrane region (pore-forming) is located at residues 1491–1513 (FGNSMICLFEITTSAGWDGLLLP). Over 1514 to 1543 (TLNTGPPDCDPDVENPGTDVRGNCGNPGKG) the chain is Extracellular. A helical membrane pass occupies residues 1544-1567 (ITFFCSYIILSFLVVVNMYIAIIL). Residues 1568 to 1820 (ENFGVAQEES…GAIVVRESIV (253 aa)) are Cytoplasmic-facing.

It belongs to the sodium channel (TC 1.A.1.10) family.

The protein resides in the cell membrane. In terms of biological role, mediates the voltage-dependent sodium ion permeability of excitable membranes. Assuming opened or closed conformations in response to the voltage difference across the membrane, the protein forms a sodium-selective channel through which Na(+) ions may pass in accordance with their electrochemical gradient. The polypeptide is Sodium channel protein (Electrophorus electricus (Electric eel)).